The sequence spans 342 residues: Glycerol-1-phosphate dehydrogenase [NAD(P)+] (342 aa).

NAD(+) contacts are provided by residues Gly-84–Asp-88 and Thr-106–Ser-109. Position 111 (Asp-111) interacts with substrate. Ser-115 lines the NAD(+) pocket. Asp-160 is a substrate binding site. Asp-160 and His-241 together coordinate Zn(2+). His-245 is a substrate binding site. His-260 is a Zn(2+) binding site.

The protein belongs to the glycerol-1-phosphate dehydrogenase family. As to quaternary structure, homodimer. Zn(2+) is required as a cofactor.

It is found in the cytoplasm. It carries out the reaction sn-glycerol 1-phosphate + NAD(+) = dihydroxyacetone phosphate + NADH + H(+). The catalysed reaction is sn-glycerol 1-phosphate + NADP(+) = dihydroxyacetone phosphate + NADPH + H(+). It functions in the pathway membrane lipid metabolism; glycerophospholipid metabolism. Catalyzes the NAD(P)H-dependent reduction of dihydroxyacetonephosphate (DHAP or glycerone phosphate) to glycerol 1-phosphate (G1P). The G1P thus generated is used as the glycerophosphate backbone of phospholipids in the cellular membranes of Archaea. The protein is Glycerol-1-phosphate dehydrogenase [NAD(P)+] of Pyrobaculum arsenaticum (strain DSM 13514 / JCM 11321 / PZ6).